The chain runs to 647 residues: Leucine aminopeptidase 2 (647 aa).

Residues 169 to 171 (QCQ) and 295 to 300 (PYGGME) each bind substrate. Residue His324 participates in Zn(2+) binding. Glu325 functions as the Proton acceptor in the catalytic mechanism. Zn(2+) is bound by residues His328 and Glu347. The active-site Proton donor is the Tyr418.

The protein belongs to the peptidase M1 family. Requires Zn(2+) as cofactor.

It is found in the cytoplasm. It localises to the nucleus. It carries out the reaction an epoxide + H2O = an ethanediol. Its function is as follows. Aminopeptidase that preferentially cleaves di- and tripeptides. Also has low epoxide hydrolase activity (in vitro). Can hydrolyze the epoxide leukotriene LTA(4) but it forms preferentially 5,6-dihydroxy-7,9,11,14-eicosatetraenoic acid rather than the cytokine leukotriene B(4) as the product compared to the homologous mammalian enzyme (in vitro). The sequence is that of Leucine aminopeptidase 2 from Yarrowia lipolytica (strain CLIB 122 / E 150) (Yeast).